The following is a 414-amino-acid chain: Peptide chain release factor subunit 1 (414 aa).

This sequence belongs to the eukaryotic release factor 1 family. In terms of assembly, heterodimer of two subunits, one of which binds GTP.

Its subcellular location is the cytoplasm. Directs the termination of nascent peptide synthesis (translation) in response to the termination codons UAA, UAG and UGA. This chain is Peptide chain release factor subunit 1, found in Methanococcoides burtonii (strain DSM 6242 / NBRC 107633 / OCM 468 / ACE-M).